Reading from the N-terminus, the 66-residue chain is Large ribosomal subunit protein bL35 (66 aa).

This sequence belongs to the bacterial ribosomal protein bL35 family.

This chain is Large ribosomal subunit protein bL35, found in Thermodesulfovibrio yellowstonii (strain ATCC 51303 / DSM 11347 / YP87).